The sequence spans 863 residues: MASDFSTGLHGGHHETLEQYNKVLEELAADAVMDPFRVEYEKLHRALRKTYESQARLAKKCQELNSDISLNASKVQSALKLNEEDRETAVALKREINKAWKMVDDSTVKETKAKETAQQLKVEIANLSRLVEEGAGLAIGEETALNELLKQKEELARERDAQVEQLMKYRSDLMETQEKLRAADAEKLQLDADIQHLRGTINDKKAEAEREIRKKERMEKEMKELRQQLEIRSSEIKSKQLQVTSTEEQVARLEQMLRDAKFATEKVQKEYNMLNERMQKLHHDLEEQIHTNTQLLTENSAKQVELRVKEEEISGIKQEASRVNKLREQTVKKTKQLEEQRVEVEKERDVLRAELAALERELEAKQKEVDVEKKKLEELTRERDAENATQKQIDLVKINENAKRNLEQEIQGYKMEAQKQSKLIYQLEKEREKYDLEAAEAANKYQQAQSEVKLRVDAIMDLQRRIAEGESKLKQQQNLYEAVRADRNLYSKNLIEAQDEIQEMKRKFKIMQHQIEQLKEEITGKDLYLLKEHFEHQKVINEKEQLRNELDRSKSNIKEADSAINAQKVEIDKLNHIINEADQERRRQKKEYDIVVNERDILGTQLVRRNDELAALYERIKIQQATLQMGQSQYRDRLAEIRQLKVRLADLKRQLHLLKSSVSNIDVLKREVHQLGRELLQERTKVKALSEELENPLNVHRWRKLEGSDPGTYEMIQKIQTLQKRLISKTEEVVEKDLLIQEKEKLYMELKNILARQPGPEVAEQLSIYQANLREKTKQMKAMASELNMYQAQVNEYKYEIERLVRELNEMKQVFFDRRKKEQADRARTMKASMYGPSLLDQLPGGSGTGSGGMATGGGVGMS.

Coiled coils occupy residues 107-600 (TVKE…NERD) and 631-815 (QSQY…KQVF). The segment at 836–863 (GPSLLDQLPGGSGTGSGGMATGGGVGMS) is disordered. Residues 845-863 (GGSGTGSGGMATGGGVGMS) are compositionally biased toward gly residues.

The protein belongs to the CFAP58 family.

Its subcellular location is the cell projection. It localises to the cilium. The protein resides in the flagellum. This Chlamydomonas reinhardtii (Chlamydomonas smithii) protein is Cilia- and flagella-associated protein 58.